The chain runs to 163 residues: CASP-like protein 1C3 (163 aa).

At 1-6 (MAKIKK) the chain is on the cytoplasmic side. A helical transmembrane segment spans residues 7 to 27 (IFTNFLRLLALAATVVAIVFM). Over 28–52 (VTSHDSAQVLNLTFTVKYSNTPVFK) the chain is Extracellular. N-linked (GlcNAc...) asparagine glycosylation is present at Asn-38. The helical transmembrane segment at 53 to 73 (YFVIAEAIAGGYIVISILLSF) threads the bilayer. Over 74–79 (KSLFWR) the chain is Cytoplasmic. A helical membrane pass occupies residues 80–100 (LLVILDMVTAVLLTSSISAAL). Over 101 to 128 (AIAQVGKKGNTHAGWLPVCEQVPDFCDQ) the chain is Extracellular. The chain crosses the membrane as a helical span at residues 129-149 (VTIALIAGFAAAIIYFVLLLC). Topologically, residues 150-163 (SLYVVLSPIFVVTP) are cytoplasmic.

This sequence belongs to the Casparian strip membrane proteins (CASP) family. Homodimer and heterodimers.

The protein resides in the cell membrane. In Populus trichocarpa (Western balsam poplar), this protein is CASP-like protein 1C3.